A 297-amino-acid polypeptide reads, in one-letter code: Non-homologous end-joining factor 1 (297 aa).

Residues 1–131 form a globular head region; the sequence is MDARLLQLPW…ATVSTVCRHL (131 aa). The interval 220-286 is C-terminal tail; it reads PKAPTHPKEE…LTHRPPAGAS (67 aa). The segment at 222–297 is disordered; that stretch reads APTHPKEEDT…PKKKAKGLFM (76 aa). Over residues 232 to 255 the composition is skewed to polar residues; it reads GNSASHRPMAESSSISFEKTVPTQ. Low complexity predominate over residues 263 to 286; it reads VSEPSQVPQSSVSCLTHRPPAGAS. Positions 287 to 297 match the XLM motif; the sequence is KPKKKAKGLFM. Basic residues predominate over residues 287 to 297; the sequence is KPKKKAKGLFM.

The protein belongs to the XRCC4-XLF family. XLF subfamily. As to quaternary structure, homodimer. Interacts with xrcc4; the interaction is direct and is mediated via a head-to-head interaction between N-terminal head regions. Component of the core long-range non-homologous end joining (NHEJ) complex (also named DNA-PK complex) composed of prkdc/DNA-PKcs, lig4, xrcc4, xrcc6/Ku70, xrcc5/Ku80 and nhej1/xlf.

It localises to the nucleus. Functionally, DNA repair protein involved in DNA non-homologous end joining (NHEJ); required for double-strand break (DSB) repair and V(D)J recombination. It is also involved in telomere maintenance. Plays a key role in NHEJ by promoting the ligation of various mismatched and non-cohesive ends. In some studies, has been shown to associate with xrcc4 to form alternating helical filaments that bridge DNA and act like a bandage, holding together the broken DNA until it is repaired. Alternatively, it has also been shown that rather than forming filaments, a single nhej1 dimer interacts through both head domains with xrcc4 to promote the close alignment of DNA ends. The xrcc4-nhej1/xlf subcomplex binds to the DNA fragments of a DSB in a highly diffusive manner and robustly bridges two independent DNA molecules, holding the broken DNA fragments in close proximity to one other. The mobility of the bridges ensures that the ends remain accessible for further processing by other repair factors. The protein is Non-homologous end-joining factor 1 of Xenopus laevis (African clawed frog).